Reading from the N-terminus, the 47-residue chain is Large ribosomal subunit protein eL40 (47 aa).

This sequence belongs to the eukaryotic ribosomal protein eL40 family.

This Methanococcus aeolicus (strain ATCC BAA-1280 / DSM 17508 / OCM 812 / Nankai-3) protein is Large ribosomal subunit protein eL40.